A 345-amino-acid chain; its full sequence is Dimethyladenosine transferase 1, mitochondrial (345 aa).

Residues 1 to 27 (MAASGKLGTFRLPPLPTIREIIKLFGL) constitute a mitochondrion transit peptide. Residues L38, G63, E85, K86, D111, V112, and N141 each coordinate S-adenosyl-L-methionine.

The protein belongs to the class I-like SAM-binding methyltransferase superfamily. rRNA adenine N(6)-methyltransferase family. KsgA subfamily. Interacts with mitochondrial RNA polymerase POLRMT. Interacts with TFAM. Remains bound to the maturing mtSSU until the late stages of assembly. As to expression, ubiquitously expressed.

Its subcellular location is the mitochondrion. The catalysed reaction is adenosine(N)/adenosine(N+1) in rRNA + 4 S-adenosyl-L-methionine = N(6)-dimethyladenosine(N)/N(6)-dimethyladenosine(N+1) in rRNA + 4 S-adenosyl-L-homocysteine + 4 H(+). In terms of biological role, mitochondrial methyltransferase which uses S-adenosyl methionine to dimethylate two highly conserved adjacent adenosine residues (A1006 and A1007) within the loop of helix 45 at the 3-prime end of 12S rRNA, thereby regulating the assembly or stability of the small subunit of the mitochondrial ribosome. Also required for basal transcription of mitochondrial DNA, probably via its interaction with POLRMT and TFAM. Stimulates transcription independently of the methyltransferase activity. The chain is Dimethyladenosine transferase 1, mitochondrial (Tfb1m) from Mus musculus (Mouse).